Here is a 162-residue protein sequence, read N- to C-terminus: MNKDEIRIGIADLNVALPPKKLITVGLGSCIGIALYDSIKKIGGLAHIMLPDSTQFSNVSNPMKFADLAIPMLLEKMEKQGAVKRHLKAKIAGGASMFNFSDKSMIMDIGNRNSKSVKKVLGEYGIPIISEDTGGNKGRTMIFSTEDGMVEIRTVGMGIRAI.

It belongs to the CheD family.

The enzyme catalyses L-glutaminyl-[protein] + H2O = L-glutamyl-[protein] + NH4(+). Probably deamidates glutamine residues to glutamate on methyl-accepting chemotaxis receptors (MCPs), playing an important role in chemotaxis. This Clostridium novyi (strain NT) protein is Probable chemoreceptor glutamine deamidase CheD.